The chain runs to 787 residues: MEPAGERFPEQRQVLILLLLLEVTLAGWEPRRYSVMEETERGSFVANLANDLGLGVGELAERGARVVSEDNEQGLQLDLQTGQLILNEKLDREKLCGPTEPCIMHFQVLLKKPLEVFRAELLVTDINDHSPEFPEREMTLKIPETSSLGTVFPLKKARDLDVGSNNVQNYNISPNSHFHVSTRTRGDGRKYPELVLDTELDREEQAELRLTLTAVDGGSPPRSGTVQILILVLDANDNAPEFVQALYEVQVPENSPVGSLVVKVSARDLDTGTNGEISYSLYYSSQEIDKPFELSSLSGEIRLIKKLDFETMSSYDLDIEASDGGGLSGKCSVSVKVLDVNDNFPELSISSLTSPIPENSPETEVALFRIRDRDSGENGKMICSIQDDVPFKLKPSVENFYRLVTEGALDRETRAEYNITITITDLGTPRLKTEQSITVLVSDVNDNAPAFTQTSYTLFVRENNSPALHIGSVSATDRDSGTNAQVTYSLLPPRDPHLPLTSLVSINTDNGHLFALQSLDYEALQAFEFRVGATDRGFPALSSEALVRVLVLDANDNSPFVLYPLQNGSAPCTELVPRAAEPGYLVTKVVAVDGDSGQNAWLSYQLLKATEPGLFGVWAHNGEVRTARLLSERDVAKHRLVVLVKDNGEPPRSATATLQVLLVDGFSQPYLPLPEAAPAQAQADSLTVYLVVALASVSSLFLFSVFLFVAVRLCRRSRAASVGRCSVPEGPFPGHLVDVSGTGTLSQSYQYEVCLTGGSESNDFKFLKPIFPNIVSQDSRRKSEFLE.

The first 26 residues, 1–26 (MEPAGERFPEQRQVLILLLLLEVTLA), serve as a signal peptide directing secretion. Topologically, residues 27–690 (GWEPRRYSVM…AQADSLTVYL (664 aa)) are extracellular. 5 consecutive Cadherin domains span residues 35–133 (VMEE…SPEF), 138–242 (MTLK…APEF), 247–347 (YEVQ…FPEL), 352–451 (LTSP…APAF), and 456–561 (YTLF…SPFV). Residue Asn-418 is glycosylated (N-linked (GlcNAc...) asparagine). An N-linked (GlcNAc...) asparagine glycan is attached at Asn-567. A Cadherin 6 domain is found at 568-671 (GSAPCTELVP…LVDGFSQPYL (104 aa)). The helical transmembrane segment at 691–711 (VVALASVSSLFLFSVFLFVAV) threads the bilayer. Over 712-787 (RLCRRSRAAS…DSRRKSEFLE (76 aa)) the chain is Cytoplasmic.

The protein resides in the cell membrane. In terms of biological role, potential calcium-dependent cell-adhesion protein. May be involved in the establishment and maintenance of specific neuronal connections in the brain. The protein is Protocadherin beta-15 (PCDHB15) of Homo sapiens (Human).